The following is a 445-amino-acid chain: Reticulon-4 receptor-like 1 (445 aa).

A signal peptide spans 1–24; that stretch reads MLRKGCCVELLLLLLAGELPLSGG. The LRRNT domain maps to 25–54; sequence CPRDCVCYPSPMTVSCQAHNFAAIPEGIPE. LRR repeat units follow at residues 55–76, 77–98, 101–123, 126–147, 150–171, 174–195, 198–219, and 222–243; these read DSERIFLQNNHITFLQQGHFSP, AMVTLWIYSNNITFIAPNTFEG, HLEELDLGDNRQLRTLAPETFQG, KLHALYLYKCGLSSLPAGIFGG, SLQYLYLQDNHIEYLQDDIFVD, NLSHLFLHGNKLWSLGQGIFRG, NLDRLLLHENQLQWVHHKAFHD, and RLTTLFLFNNSLTELQGDCLAP. The LRRCT domain occupies 255–306; sequence NAWDCGCRARSLWEWLRRFRGSSSVVPCATPELRQGQDLKSLRVEDFRNCTG. Disordered stretches follow at residues 304-380 and 401-421; these read CTGP…ELPE and RPKRKGKCARRTPIRAPSGVQ. Basic residues-rich tracts occupy residues 352 to 366 and 401 to 413; these read GSKKPGKNCTSHRNR and RPKRKGKCARRTP. Ser424 carries the GPI-anchor amidated serine lipid modification. The chain crosses the membrane as a helical span at residues 424-444; sequence SSGTALGVSLLAWILGLVVSL. Residues 425–445 constitute a propeptide, removed in mature form; that stretch reads SGTALGVSLLAWILGLVVSLR.

The protein belongs to the Nogo receptor family. Identified in a complex that contains RTN4R, RTN4RL1 and NGFR; the interaction depends on the presence of chondroitin sulfate proteoglycans. Does not interact with MAG, OMG and RTN4. Detected in brain (at protein level). Expressed in various regions of the brain, including the cerebral cortex, hippocampus, striatum, thalamus and cerebellum.

It is found in the cell membrane. It localises to the membrane raft. The protein resides in the perikaryon. Its subcellular location is the cell projection. Cell surface receptor. Plays a functionally redundant role in postnatal brain development and in regulating axon regeneration in the adult central nervous system. Contributes to normal axon migration across the brain midline and normal formation of the corpus callosum. Protects motoneurons against apoptosis; protection against apoptosis is probably mediated by MAG. Plays a role in inhibiting neurite outgrowth and axon regeneration via its binding to neuronal chondroitin sulfate proteoglycans. Binds heparin. Like other family members, plays a role in restricting the number dendritic spines and the number of synapses that are formed during brain development. Signaling mediates activation of Rho and downstream reorganization of the actin cytoskeleton. This Rattus norvegicus (Rat) protein is Reticulon-4 receptor-like 1.